A 204-amino-acid chain; its full sequence is Large ribosomal subunit protein eL15 (204 aa).

Belongs to the eukaryotic ribosomal protein eL15 family. In terms of assembly, component of the large ribosomal subunit.

It localises to the cytoplasm. Functionally, component of the large ribosomal subunit. The ribosome is a large ribonucleoprotein complex responsible for the synthesis of proteins in the cell. In Hypophthalmichthys molitrix (Silver carp), this protein is Large ribosomal subunit protein eL15 (rpl15).